Consider the following 331-residue polypeptide: Putative ankyrin repeat protein FPV012 (331 aa).

ANK repeat units follow at residues Asp-11 to Thr-40, Asp-44 to Lys-73, Asp-77 to Tyr-106, and Tyr-110 to Gln-139.

The polypeptide is Putative ankyrin repeat protein FPV012 (Vertebrata (FPV)).